The following is a 443-amino-acid chain: Ribulose bisphosphate carboxylase large chain (443 aa).

Lysine 3 carries the N6,N6,N6-trimethyllysine modification. Substrate-binding residues include asparagine 112 and threonine 162. Lysine 164 (proton acceptor) is an active-site residue. Substrate is bound at residue lysine 166. Residues lysine 190, aspartate 192, and glutamate 193 each coordinate Mg(2+). The residue at position 190 (lysine 190) is an N6-carboxylysine. The active-site Proton acceptor is histidine 283. Substrate-binding residues include arginine 284, histidine 316, and serine 368.

This sequence belongs to the RuBisCO large chain family. Type I subfamily. As to quaternary structure, heterohexadecamer of 8 large chains and 8 small chains; disulfide-linked. The disulfide link is formed within the large subunit homodimers. It depends on Mg(2+) as a cofactor. In terms of processing, the disulfide bond which can form in the large chain dimeric partners within the hexadecamer appears to be associated with oxidative stress and protein turnover.

It localises to the plastid. Its subcellular location is the chloroplast. It carries out the reaction 2 (2R)-3-phosphoglycerate + 2 H(+) = D-ribulose 1,5-bisphosphate + CO2 + H2O. It catalyses the reaction D-ribulose 1,5-bisphosphate + O2 = 2-phosphoglycolate + (2R)-3-phosphoglycerate + 2 H(+). RuBisCO catalyzes two reactions: the carboxylation of D-ribulose 1,5-bisphosphate, the primary event in carbon dioxide fixation, as well as the oxidative fragmentation of the pentose substrate in the photorespiration process. Both reactions occur simultaneously and in competition at the same active site. The protein is Ribulose bisphosphate carboxylase large chain of Iris germanica (Bearded iris).